The primary structure comprises 432 residues: Adenylosuccinate synthetase (432 aa).

Residues 13 to 19 (GDEGKGK) and 41 to 43 (GHT) each bind GTP. Aspartate 14 functions as the Proton acceptor in the catalytic mechanism. Aspartate 14 and glycine 41 together coordinate Mg(2+). IMP-binding positions include 14 to 17 (DEGK), 39 to 42 (NAGH), threonine 130, arginine 144, glutamine 225, threonine 240, and arginine 304. Histidine 42 (proton donor) is an active-site residue. 300 to 306 (AVTGRPR) is a binding site for substrate. Residues arginine 306, 332–334 (KLD), and 415–417 (STG) contribute to the GTP site.

Belongs to the adenylosuccinate synthetase family. As to quaternary structure, homodimer. Requires Mg(2+) as cofactor.

It localises to the cytoplasm. The catalysed reaction is IMP + L-aspartate + GTP = N(6)-(1,2-dicarboxyethyl)-AMP + GDP + phosphate + 2 H(+). The protein operates within purine metabolism; AMP biosynthesis via de novo pathway; AMP from IMP: step 1/2. Its function is as follows. Plays an important role in the de novo pathway of purine nucleotide biosynthesis. Catalyzes the first committed step in the biosynthesis of AMP from IMP. This Actinobacillus succinogenes (strain ATCC 55618 / DSM 22257 / CCUG 43843 / 130Z) protein is Adenylosuccinate synthetase.